A 276-amino-acid chain; its full sequence is NH(3)-dependent NAD(+) synthetase (276 aa).

43–50 (GISGGVDS) contributes to the ATP binding site. Asp49 is a binding site for Mg(2+). Residue Arg146 coordinates deamido-NAD(+). Thr166 provides a ligand contact to ATP. A Mg(2+)-binding site is contributed by Glu171. Positions 179 and 186 each coordinate deamido-NAD(+). The ATP site is built by Lys195 and Thr217. Residue 266–267 (HK) participates in deamido-NAD(+) binding.

Belongs to the NAD synthetase family. Homodimer.

The catalysed reaction is deamido-NAD(+) + NH4(+) + ATP = AMP + diphosphate + NAD(+) + H(+). It functions in the pathway cofactor biosynthesis; NAD(+) biosynthesis; NAD(+) from deamido-NAD(+) (ammonia route): step 1/1. In terms of biological role, catalyzes the ATP-dependent amidation of deamido-NAD to form NAD. Uses ammonia as a nitrogen source. The polypeptide is NH(3)-dependent NAD(+) synthetase (Psychromonas ingrahamii (strain DSM 17664 / CCUG 51855 / 37)).